The following is a 131-amino-acid chain: Holo-[acyl-carrier-protein] synthase (131 aa).

2 residues coordinate Mg(2+): Asp-8 and Glu-59.

The protein belongs to the P-Pant transferase superfamily. AcpS family. It depends on Mg(2+) as a cofactor.

The protein localises to the cytoplasm. The catalysed reaction is apo-[ACP] + CoA = holo-[ACP] + adenosine 3',5'-bisphosphate + H(+). In terms of biological role, transfers the 4'-phosphopantetheine moiety from coenzyme A to a Ser of acyl-carrier-protein. This is Holo-[acyl-carrier-protein] synthase from Rickettsia massiliae (strain Mtu5).